Consider the following 533-residue polypeptide: Probable protein kinase UbiB (533 aa).

A helical transmembrane segment spans residues L24–W44. In terms of domain architecture, Protein kinase spans R126–G494. ATP-binding positions include L132–V140 and K154. D289 serves as the catalytic Proton acceptor. The helical transmembrane segment at L510–I530 threads the bilayer.

This sequence belongs to the ABC1 family. UbiB subfamily.

The protein resides in the cell inner membrane. Its pathway is cofactor biosynthesis; ubiquinone biosynthesis [regulation]. Functionally, is probably a protein kinase regulator of UbiI activity which is involved in aerobic coenzyme Q (ubiquinone) biosynthesis. This is Probable protein kinase UbiB from Pseudomonas aeruginosa (strain ATCC 15692 / DSM 22644 / CIP 104116 / JCM 14847 / LMG 12228 / 1C / PRS 101 / PAO1).